The following is a 263-amino-acid chain: uncharacterized protein (263 aa).

An ATP-binding site is contributed by 31–38 (GPTGSGKT).

It belongs to the CbbQ/NirQ/NorQ/GpvN family.

This is an uncharacterized protein from Staphylococcus epidermidis (strain ATCC 12228 / FDA PCI 1200).